The primary structure comprises 86 residues: Small ribosomal subunit protein bS20 (86 aa).

Basic and acidic residues predominate over residues Met-1–Arg-16. Residues Met-1–Lys-25 are disordered.

It belongs to the bacterial ribosomal protein bS20 family.

Its function is as follows. Binds directly to 16S ribosomal RNA. The protein is Small ribosomal subunit protein bS20 of Mycobacterium sp. (strain JLS).